The chain runs to 315 residues: Putative carboxypeptidase RC0549 (315 aa).

Serine 125 serves as the catalytic Nucleophile. Catalysis depends on charge relay system residues glutamate 225 and histidine 288.

This sequence belongs to the peptidase S66 family.

This is Putative carboxypeptidase RC0549 from Rickettsia conorii (strain ATCC VR-613 / Malish 7).